Reading from the N-terminus, the 128-residue chain is Large ribosomal subunit protein bL12 (128 aa).

The protein belongs to the bacterial ribosomal protein bL12 family. As to quaternary structure, homodimer. Part of the ribosomal stalk of the 50S ribosomal subunit. Forms a multimeric L10(L12)X complex, where L10 forms an elongated spine to which 2 to 4 L12 dimers bind in a sequential fashion. Binds GTP-bound translation factors.

Its function is as follows. Forms part of the ribosomal stalk which helps the ribosome interact with GTP-bound translation factors. Is thus essential for accurate translation. In Thermosipho africanus (strain TCF52B), this protein is Large ribosomal subunit protein bL12.